The chain runs to 270 residues: Sulfur carrier protein FdhD (270 aa).

Composition is skewed to basic and acidic residues over residues 1 to 10 (MSMQDHDRTE) and 20 to 30 (RHLDGSSRPDW). Residues 1 to 30 (MSMQDHDRTEQGMTSLAVTRHLDGSSRPDW) form a disordered region. Cys-117 (cysteine persulfide intermediate) is an active-site residue.

Belongs to the FdhD family.

The protein resides in the cytoplasm. Required for formate dehydrogenase (FDH) activity. Acts as a sulfur carrier protein that transfers sulfur from IscS to the molybdenum cofactor prior to its insertion into FDH. The chain is Sulfur carrier protein FdhD from Chromobacterium violaceum (strain ATCC 12472 / DSM 30191 / JCM 1249 / CCUG 213 / NBRC 12614 / NCIMB 9131 / NCTC 9757 / MK).